We begin with the raw amino-acid sequence, 329 residues long: Vitamin B12 import system permease protein BtuC (329 aa).

Helical transmembrane passes span 22-42 (LSVLMLLAVVLSLCAGDQWIA), 64-84 (LAVLLVGAALALSGAVMQALF), 91-111 (PGLLGVSNGAGVGLIAAVLLG), 115-135 (LPGWALGFCAIAGALIITLIL), 149-169 (LLAGVALGIICSAMMTWAIYF), 187-207 (GGVDWQQAWLMIALIPVSLWI), 243-263 (GWMVGVSVALAGSIGFIGLVI), 277-297 (ALLPGCALAGAIALLLADVIA), and 305-325 (ELPIGVVTATMGAPVFIWLLL).

Belongs to the binding-protein-dependent transport system permease family. FecCD subfamily. In terms of assembly, the complex is composed of two ATP-binding proteins (BtuD), two transmembrane proteins (BtuC) and a solute-binding protein (BtuF).

It localises to the cell inner membrane. In terms of biological role, part of the ABC transporter complex BtuCDF involved in vitamin B12 import. Involved in the translocation of the substrate across the membrane. The protein is Vitamin B12 import system permease protein BtuC of Citrobacter koseri (strain ATCC BAA-895 / CDC 4225-83 / SGSC4696).